A 145-amino-acid polypeptide reads, in one-letter code: Protein H2A.5 (145 aa).

Residues 118-145 (SPAAAEKEAKSQKAAAKSPKKKTAATKE) form a disordered region. The SPKK motif signature appears at 135 to 138 (SPKK). A compositionally biased stretch (basic residues) spans 135–145 (SPKKKTAATKE).

Belongs to the histone H2A family. The nucleosome is a histone octamer containing two molecules each of H2A, H2B, H3 and H4 assembled in one H3-H4 heterotetramer and two H2A-H2B heterodimers. The octamer wraps approximately 147 bp of DNA. In terms of tissue distribution, abundant in meristematic tissues.

Its subcellular location is the nucleus. It localises to the chromosome. Its function is as follows. Core component of nucleosome. Nucleosomes wrap and compact DNA into chromatin, limiting DNA accessibility to the cellular machineries which require DNA as a template. Histones thereby play a central role in transcription regulation, DNA repair, DNA replication and chromosomal stability. DNA accessibility is regulated via a complex set of post-translational modifications of histones, also called histone code, and nucleosome remodeling. The sequence is that of Protein H2A.5 (H2A-2) from Triticum aestivum (Wheat).